The primary structure comprises 207 residues: 3-isopropylmalate dehydratase small subunit (207 aa).

Belongs to the LeuD family. LeuD type 1 subfamily. Heterodimer of LeuC and LeuD.

The catalysed reaction is (2R,3S)-3-isopropylmalate = (2S)-2-isopropylmalate. It participates in amino-acid biosynthesis; L-leucine biosynthesis; L-leucine from 3-methyl-2-oxobutanoate: step 2/4. Functionally, catalyzes the isomerization between 2-isopropylmalate and 3-isopropylmalate, via the formation of 2-isopropylmaleate. In Buchnera aphidicola subsp. Rhopalosiphum padi, this protein is 3-isopropylmalate dehydratase small subunit (leuD).